Reading from the N-terminus, the 241-residue chain is MAPVRRSAKWRPGGIEARGEGVSTVGYRNKNVRQKTWRPNHPQAFVGSVREGQGFAFRRKLKIQQSYKKLLRKEKKAQTSLESQFTDRYPDNLKHLYLAEEERHRKQARKVDHPLSEQVHQPLLEEQCSIDEPLFEDQCSFDQPQPEEQCIKTVNSFTIPKKNKKKTSNQKAQEEYEQIQAKRAAKKQEFERRKQEREEAQRQYKKKKMEVFKILNKKTKKGQPNLNVQMEYLLQKIQEKC.

Disordered stretches follow at residues Met-1–Val-22 and Lys-182–Lys-205. The span at Lys-186–Arg-202 shows a compositional bias: basic and acidic residues.

It belongs to the TAP26 family. In terms of assembly, interacts with NKX2-1. Ubiquitously expressed. In lung, expression is restricted to the alveolar epithelial cells.

It localises to the nucleus. Its function is as follows. Component of the transcription complexes of the pulmonary surfactant-associated protein-B (SFTPB) and -C (SFTPC). Enhances homeobox protein Nkx-2.1-activated SFTPB and SFTPC promoter activities. The polypeptide is Thyroid transcription factor 1-associated protein 26 (CCDC59) (Homo sapiens (Human)).